A 422-amino-acid chain; its full sequence is Serine--tRNA ligase (422 aa).

Position 238-240 (Thr-238–Glu-240) interacts with L-serine. Arg-269–Glu-271 contributes to the ATP binding site. Glu-292 provides a ligand contact to L-serine. Glu-356 to Ser-359 provides a ligand contact to ATP. Ser-390 lines the L-serine pocket.

It belongs to the class-II aminoacyl-tRNA synthetase family. Type-1 seryl-tRNA synthetase subfamily. Homodimer. The tRNA molecule binds across the dimer.

It localises to the cytoplasm. The enzyme catalyses tRNA(Ser) + L-serine + ATP = L-seryl-tRNA(Ser) + AMP + diphosphate + H(+). It carries out the reaction tRNA(Sec) + L-serine + ATP = L-seryl-tRNA(Sec) + AMP + diphosphate + H(+). It functions in the pathway aminoacyl-tRNA biosynthesis; selenocysteinyl-tRNA(Sec) biosynthesis; L-seryl-tRNA(Sec) from L-serine and tRNA(Sec): step 1/1. Catalyzes the attachment of serine to tRNA(Ser). Is also able to aminoacylate tRNA(Sec) with serine, to form the misacylated tRNA L-seryl-tRNA(Sec), which will be further converted into selenocysteinyl-tRNA(Sec). The polypeptide is Serine--tRNA ligase (Helicobacter hepaticus (strain ATCC 51449 / 3B1)).